A 187-amino-acid chain; its full sequence is Orotate phosphoribosyltransferase (187 aa).

5-phospho-alpha-D-ribose 1-diphosphate is bound at residue 110–118 (EDVVTTGGS). 2 residues coordinate orotate: threonine 114 and arginine 142.

Belongs to the purine/pyrimidine phosphoribosyltransferase family. PyrE subfamily. As to quaternary structure, homodimer. Mg(2+) serves as cofactor.

It catalyses the reaction orotidine 5'-phosphate + diphosphate = orotate + 5-phospho-alpha-D-ribose 1-diphosphate. It participates in pyrimidine metabolism; UMP biosynthesis via de novo pathway; UMP from orotate: step 1/2. In terms of biological role, catalyzes the transfer of a ribosyl phosphate group from 5-phosphoribose 1-diphosphate to orotate, leading to the formation of orotidine monophosphate (OMP). The chain is Orotate phosphoribosyltransferase from Thermotoga neapolitana (strain ATCC 49049 / DSM 4359 / NBRC 107923 / NS-E).